Reading from the N-terminus, the 418-residue chain is 26S proteasome regulatory subunit 6B (418 aa).

The residue at position 1 (Met-1) is an N-acetylmethionine. Position 21 is a phosphoserine (Ser-21). Phosphothreonine is present on Thr-25. A Phosphoserine modification is found at Ser-28. 206–213 lines the ATP pocket; that stretch reads GPPGCGKT. Lys-397 and Lys-401 each carry N6-acetyllysine.

The protein belongs to the AAA ATPase family. Component of the 19S proteasome regulatory particle complex. The 26S proteasome consists of a 20S core particle (CP) and two 19S regulatory subunits (RP). The regulatory particle is made of a lid composed of 9 subunits, a base containing 6 ATPases including PSMC4 and few additional components. Interacts with NR1I3. Interacts with PAAF1. Interacts with TRIM5. Interacts with ZFAND1.

Its subcellular location is the cytoplasm. It localises to the nucleus. Functionally, component of the 26S proteasome, a multiprotein complex involved in the ATP-dependent degradation of ubiquitinated proteins. This complex plays a key role in the maintenance of protein homeostasis by removing misfolded or damaged proteins, which could impair cellular functions, and by removing proteins whose functions are no longer required. Therefore, the proteasome participates in numerous cellular processes, including cell cycle progression, apoptosis, or DNA damage repair. PSMC4 belongs to the heterohexameric ring of AAA (ATPases associated with diverse cellular activities) proteins that unfolds ubiquitinated target proteins that are concurrently translocated into a proteolytic chamber and degraded into peptides. The protein is 26S proteasome regulatory subunit 6B (PSMC4) of Bos taurus (Bovine).